Reading from the N-terminus, the 142-residue chain is Putative pre-16S rRNA nuclease (142 aa).

It belongs to the YqgF nuclease family.

It localises to the cytoplasm. Could be a nuclease involved in processing of the 5'-end of pre-16S rRNA. This Desulfitobacterium hafniense (strain DSM 10664 / DCB-2) protein is Putative pre-16S rRNA nuclease.